The following is a 248-amino-acid chain: Tyrosine recombinase XerD-like (248 aa).

The Core-binding (CB) domain maps to 1–72; that stretch reads MKSYIEPFIA…TANQFLYYLY (72 aa). Residues 85 to 248 enclose the Tyr recombinase domain; the sequence is DTMKVMRTEK…PVTLEKYYKS (164 aa). Residues Lys-149 and Arg-213 contribute to the active site. Tyr-245 functions as the O-(3'-phospho-DNA)-tyrosine intermediate in the catalytic mechanism.

The protein belongs to the 'phage' integrase family. XerD-like subfamily.

Its subcellular location is the cytoplasm. In terms of biological role, putative tyrosine recombinase. Not involved in the cutting and rejoining of the recombining DNA molecules on dif(SL) site. This chain is Tyrosine recombinase XerD-like, found in Streptococcus pyogenes serotype M6 (strain ATCC BAA-946 / MGAS10394).